Reading from the N-terminus, the 433-residue chain is Probable non-inhibitory serpin-Z5 (433 aa).

Residues 1 to 12 (MEPKEKKQKLDT) show a composition bias toward basic and acidic residues. Residues 1-43 (MEPKEKKQKLDTSEVASPSLSKTHLKKKKTKKQKIRKSQEITS) are disordered. The segment covering 23-36 (THLKKKKTKKQKIR) has biased composition (basic residues). Positions 380–404 (GTEAVTFTAFRSAYLGCALVKPIDF) are RCL.

Belongs to the serpin family. In terms of tissue distribution, weakly expressed during seedling development.

The sequence is that of Probable non-inhibitory serpin-Z5 from Arabidopsis thaliana (Mouse-ear cress).